Here is a 454-residue protein sequence, read N- to C-terminus: Allantoinase (454 aa).

The Zn(2+) site is built by histidine 60, histidine 62, lysine 147, histidine 183, histidine 239, and aspartate 312. Lysine 147 bears the N6-carboxylysine mark.

This sequence belongs to the metallo-dependent hydrolases superfamily. Allantoinase family. In terms of assembly, homotetramer. Requires Zn(2+) as cofactor. Carboxylation allows a single lysine to coordinate two zinc ions.

It carries out the reaction (S)-allantoin + H2O = allantoate + H(+). The protein operates within nitrogen metabolism; (S)-allantoin degradation; allantoate from (S)-allantoin: step 1/1. In terms of biological role, catalyzes the conversion of allantoin (5-ureidohydantoin) to allantoic acid by hydrolytic cleavage of the five-member hydantoin ring. The sequence is that of Allantoinase from Bacillus velezensis (strain DSM 23117 / BGSC 10A6 / LMG 26770 / FZB42) (Bacillus amyloliquefaciens subsp. plantarum).